The following is a 267-amino-acid chain: Ribosomal RNA small subunit methyltransferase A (267 aa).

The S-adenosyl-L-methionine site is built by Asn-13, Leu-15, Gly-39, Glu-59, Asp-87, and Asn-106.

It belongs to the class I-like SAM-binding methyltransferase superfamily. rRNA adenine N(6)-methyltransferase family. RsmA subfamily.

It localises to the cytoplasm. The catalysed reaction is adenosine(1518)/adenosine(1519) in 16S rRNA + 4 S-adenosyl-L-methionine = N(6)-dimethyladenosine(1518)/N(6)-dimethyladenosine(1519) in 16S rRNA + 4 S-adenosyl-L-homocysteine + 4 H(+). Functionally, specifically dimethylates two adjacent adenosines (A1518 and A1519) in the loop of a conserved hairpin near the 3'-end of 16S rRNA in the 30S particle. May play a critical role in biogenesis of 30S subunits. This Sulfurimonas denitrificans (strain ATCC 33889 / DSM 1251) (Thiomicrospira denitrificans (strain ATCC 33889 / DSM 1251)) protein is Ribosomal RNA small subunit methyltransferase A.